Here is a 524-residue protein sequence, read N- to C-terminus: MASVGLQFQASAGDADPQSRPLLLLGQLQHLHRVPWSHVRGKLQPRVTEELWQAALATLNPNPTDSCPLYLNCATVAALPSRVSRHNSPSAAHFITRLVRTCLPPGTHRCILMVCEQTEVFASACALARAFPLFTHRSGASRRAEKRTVMVEFFLVGQDNGPVEVSTLQCLTNATEGVRLAARIVDTPCNEMNTDIFLEEIIQVGKELGITPTIIRDEQLKTKGFGGIYGVGKAALHPPALAILSHTPDGATQTIAWVGKGIVYDTGGLSIKGKTTMPGMKRDCGGAAAVLGAFRAAIKQGFKDNLHAVFCLAENAVGPNATRPDDIHLLYSGKTVEINNTDAEGRLVLADGVSYACKDLGADIIVDMATLTGAQGIATGKYHAAVLTNSAEWEAACVKAGRKCGDLVHPLVYCPELHFSEFTSAVADMKNSVADRDNSPSSCAGLFIASHIGFDWPGVWVHLDIAAPVHAGERATGFGVALLLALFGRASEDPLLNLVSPLDCEVDAQEGDNMGRDSKRRRLV.

Residues Lys-260 and Asp-265 each contribute to the Zn(2+) site. The active site involves Lys-272. Asp-283, Asp-342, and Glu-344 together coordinate Zn(2+). Arg-346 is an active-site residue.

Belongs to the peptidase M17 family. The cofactor is Zn(2+). Mn(2+) serves as cofactor.

Its function is as follows. Probably catalyzes the removal of unsubstituted N-terminal amino acids from various peptides. The protein is Probable aminopeptidase NPEPL1 (Npepl1) of Mus musculus (Mouse).